The following is a 216-amino-acid chain: GTP-binding nuclear protein spi1 (216 aa).

A Small GTPase Ran-type domain is found at 6–170; that stretch reads NVPTFKLVLV…LWLARKLVGN (165 aa). A GTP-binding site is contributed by 17–24; it reads DGGTGKTT. Threonine 20 is subject to Phosphothreonine. A switch-I region spans residues 36–44; sequence KKYIATLGV. Residues glycine 67, 121 to 124, and 149 to 151 each bind GTP; these read NKVD and SAK. The interval 67-83 is switch-II; the sequence is GQEKLGGLRDGYYIQGQ.

It belongs to the small GTPase superfamily. Ran family. As to quaternary structure, oligomer of dis3, pim1 and spi1. Found in a nuclear export complex with RanGTP, exportin and pre-miRNA. Interacts with fft3.

The protein localises to the nucleus. GTP-binding protein involved in nucleocytoplasmic transport. Required for the import of protein into the nucleus and also for RNA export. The sequence is that of GTP-binding nuclear protein spi1 (spi1) from Schizosaccharomyces pombe (strain 972 / ATCC 24843) (Fission yeast).